Reading from the N-terminus, the 705-residue chain is Fatty acid oxidation complex subunit alpha (705 aa).

The tract at residues 1 to 190 (MSEQKAFNLK…KLGVVDACVP (190 aa)) is enoyl-CoA hydratase. The segment at 308–705 (SKVGMVGVLG…AGEGRRFYDN (398 aa)) is 3-hydroxyacyl-CoA dehydrogenase.

It in the N-terminal section; belongs to the enoyl-CoA hydratase/isomerase family. In the central section; belongs to the 3-hydroxyacyl-CoA dehydrogenase family. Heterotetramer of two alpha chains (FadJ) and two beta chains (FadI).

It is found in the cytoplasm. The enzyme catalyses a (3S)-3-hydroxyacyl-CoA = a (2E)-enoyl-CoA + H2O. The catalysed reaction is a 4-saturated-(3S)-3-hydroxyacyl-CoA = a (3E)-enoyl-CoA + H2O. It carries out the reaction a (3S)-3-hydroxyacyl-CoA + NAD(+) = a 3-oxoacyl-CoA + NADH + H(+). It catalyses the reaction (3S)-3-hydroxybutanoyl-CoA = (3R)-3-hydroxybutanoyl-CoA. It participates in lipid metabolism; fatty acid beta-oxidation. Catalyzes the formation of a hydroxyacyl-CoA by addition of water on enoyl-CoA. Also exhibits 3-hydroxyacyl-CoA epimerase and 3-hydroxyacyl-CoA dehydrogenase activities. This Vibrio vulnificus (strain CMCP6) protein is Fatty acid oxidation complex subunit alpha.